The sequence spans 264 residues: Small ribosomal subunit protein uS2 (264 aa).

A disordered region spans residues 222–246 (GRSENKDEQNEQGEQIAPVTNEEKQ).

It belongs to the universal ribosomal protein uS2 family.

In Helicobacter hepaticus (strain ATCC 51449 / 3B1), this protein is Small ribosomal subunit protein uS2.